The primary structure comprises 417 residues: MTSALLEDLRWRGLIYQETHPEEMEALLNKESVSVYCGTDPTADSLHIGHLLPFMTLKRFQAHGHRPVVLIGGATGMIGDPSGRTDERTLQTLAQVQHNVDGISKQMEQLFDFGTENGAIRVDNKDWLGKIDLLTFLRDYGKHVGVNYLLNKDSIASRLETGISFTEFTYTILQAIDFGHLNKTLNVKLQIGGSDQWGNITSGMELMRRMYGEVEAYGMTVPLVVKSDGKKFGKSEGGAVWLDRTKTTPYEFYQFWINTPDSDVIKFLKYFTFLSKEEIDALETSVENEPHLRLAQKRLAEEVTKYVHDESALEEAVNITDALFKGDLKALTADQLRTSFKDVPQAKVTTTNLVELLIEAGISPSKRQAREDITNGAISINGEKVQDVAYEIVATDKIEDEFTIIRRGKKKYFMIIH.

Tyr36 lines the L-tyrosine pocket. A 'HIGH' region motif is present at residues 41-50 (PTADSLHIGH). L-tyrosine contacts are provided by Tyr170 and Gln174. The 'KMSKS' region motif lies at 231–235 (KFGKS). Lys234 is an ATP binding site. The S4 RNA-binding domain occupies 351-417 (TNLVELLIEA…GKKKYFMIIH (67 aa)).

The protein belongs to the class-I aminoacyl-tRNA synthetase family. TyrS type 1 subfamily. In terms of assembly, homodimer.

The protein resides in the cytoplasm. It catalyses the reaction tRNA(Tyr) + L-tyrosine + ATP = L-tyrosyl-tRNA(Tyr) + AMP + diphosphate + H(+). Its function is as follows. Catalyzes the attachment of tyrosine to tRNA(Tyr) in a two-step reaction: tyrosine is first activated by ATP to form Tyr-AMP and then transferred to the acceptor end of tRNA(Tyr). The protein is Tyrosine--tRNA ligase of Macrococcus caseolyticus (strain JCSC5402) (Macrococcoides caseolyticum).